The sequence spans 793 residues: Ferredoxin/F(420)H(2)-dependent CoB-CoM heterodisulfide reductase subunit A (793 aa).

147–170 (GGGVAGIEAALNLAEAGFPVTMVE) contacts FAD. 4 4Fe-4S ferredoxin-type domains span residues 233 to 264 (RKPR…PMNY), 282 to 311 (QVVL…YEQK), 571 to 600 (MGAH…IENK), and 601 to 629 (KAVV…MRNF). [4Fe-4S] cluster is bound by residues Cys-243, Cys-246, Cys-250, Cys-254, Cys-291, Cys-294, Cys-297, Cys-301, Cys-580, Cys-583, Cys-586, Cys-590, Cys-609, Cys-612, Cys-615, and Cys-619.

The protein belongs to the HdrA family. In terms of assembly, the ferredoxin/F(420)H(2)-dependent CoB-CoM heterodisulfide reductase is composed of three subunits; HdrA2, HdrB2 and HdrC2. It depends on [4Fe-4S] cluster as a cofactor. [2Fe-2S] cluster serves as cofactor. Requires FAD as cofactor.

The protein resides in the cytoplasm. It carries out the reaction coenzyme B + coenzyme M + 2 oxidized [2Fe-2S]-[ferredoxin] = coenzyme M-coenzyme B heterodisulfide + 2 reduced [2Fe-2S]-[ferredoxin] + 2 H(+). The catalysed reaction is coenzyme B + 2 oxidized coenzyme F420-(gamma-L-Glu)(n) + coenzyme M + 2 reduced [2Fe-2S]-[ferredoxin] + 4 H(+) = coenzyme M-coenzyme B heterodisulfide + 2 reduced coenzyme F420-(gamma-L-Glu)(n) + 2 oxidized [2Fe-2S]-[ferredoxin]. Its pathway is cofactor metabolism; coenzyme M-coenzyme B heterodisulfide reduction; coenzyme B and coenzyme M from coenzyme M-coenzyme B heterodisulfide: step 1/1. Functionally, part of a complex that catalyzes the reversible reduction of CoM-S-S-CoB to the thiol-coenzymes H-S-CoM (coenzyme M) and H-S-CoB (coenzyme B). Catalyzes the transfer of electrons from ferredoxin to CoM-S-S-CoB during methanogenesis from acetate. Electrons transfer from ferredoxin to CoM-S-S-CoB via HdrA2, HdrC2 and HdrB2. In addition, the complex can use electron bifurcation to direct electron pairs from reduced coenzyme F420 towards the reduction of both ferredoxin and CoB-CoM heterodisulfide. This activity may take place during Fe(III)-dependent anaerobic methane oxidation. This chain is Ferredoxin/F(420)H(2)-dependent CoB-CoM heterodisulfide reductase subunit A, found in Methanosarcina acetivorans (strain ATCC 35395 / DSM 2834 / JCM 12185 / C2A).